A 159-amino-acid chain; its full sequence is Neuroglobin-2 (159 aa).

Positions 3-151 (KLTEKDKELI…VVAAMSRGWA (149 aa)) constitute a Globin domain. Residues histidine 66 and histidine 98 each coordinate heme b.

Belongs to the globin family. Monomer. Homodimers and homotetramers. Mainly monomeric but also detected as part of homodimers and homotetramers.

It is found in the cytoplasm. Its subcellular location is the cytosol. It localises to the mitochondrion matrix. It carries out the reaction Fe(III)-heme b-[protein] + nitric oxide + H2O = Fe(II)-heme b-[protein] + nitrite + 2 H(+). Functionally, monomeric globin with a bis-histidyl six-coordinate heme-iron atom through which it can bind dioxygen, carbon monoxide and nitric oxide. Could help transport oxygen and increase its availability to the metabolically active neuronal tissues, though its low quantity in tissues as well as its high affinity for dioxygen, which may limit its oxygen-releasing ability, argue against it. The ferrous/deoxygenated form exhibits a nitrite reductase activity and it could produce nitric oxide which in turn inhibits cellular respiration in response to hypoxia. In its ferrous/deoxygenated state, it may also exhibit GDI (Guanine nucleotide Dissociation Inhibitor) activity toward heterotrimeric G-alpha proteins, thereby regulating signal transduction to facilitate neuroprotective responses in the wake of hypoxia and associated oxidative stress. The protein is Neuroglobin-2 (ngb2) of Oncorhynchus mykiss (Rainbow trout).